Reading from the N-terminus, the 235-residue chain is Histidine/lysine/arginine/ornithine transport system permease protein HisM (235 aa).

The Periplasmic segment spans residues 1–26 (MIEIIQEYWKSLLWTDGYRFTGVAIT). An ABC transmembrane type-1 domain is found at 23–221 (VAITLWLLIS…LISYVLISLF (199 aa)). The helical transmembrane segment at 27 to 47 (LWLLISSVVMGGLLAVILAVG) threads the bilayer. The Cytoplasmic segment spans residues 48-58 (RVSSNKFIRFP). The chain crosses the membrane as a helical span at residues 59-79 (IWLFTYIFRGTPLYVQLLVFY). At 80 to 104 (SGMYTLEIVKGTDLLNAFFRSGLNC) the chain is on the periplasmic side. Residues 105-125 (TVLALTLNTCAYTTEIFAGAI) form a helical membrane-spanning segment. Topologically, residues 126 to 157 (RSVPHGEIEAARAYGFSSFKMYRCIILPSALR) are cytoplasmic. A helical membrane pass occupies residues 158–178 (IALPAYSNEVILMLHSTALAF). Residues 179–199 (TATVPDLLKIARDINSATYQP) lie on the Periplasmic side of the membrane. Residues 200–220 (FTAFGIAAVLYLLISYVLISL) traverse the membrane as a helical segment. The Cytoplasmic segment spans residues 221-235 (FRRAERRWLQHVSSK).

The protein belongs to the binding-protein-dependent transport system permease family. HisMQ subfamily. As to quaternary structure, the HisPMQJ complex is composed of two ATP-binding proteins (HisP), two transmembrane proteins (HisM and HisQ) and a solute-binding protein (HisJ). The HisPMQ-ArgT complex is composed of two ATP-binding proteins (HisP), two transmembrane proteins (HisM and HisQ) and a solute-binding protein (ArgT).

The protein localises to the cell inner membrane. Its function is as follows. Part of the ABC transporter complex HisPMQJ involved in histidine transport. Is also part of the ABC transporter complex HisPMQ-ArgT involved in lysine/arginine/ornithine transport. Probably responsible for the translocation of the substrate across the membrane. The protein is Histidine/lysine/arginine/ornithine transport system permease protein HisM (hisM) of Salmonella typhi.